A 498-amino-acid polypeptide reads, in one-letter code: ADP,ATP carrier protein 1 (498 aa).

The Cytoplasmic portion of the chain corresponds to 1-33 (MSTSKSENYLSELRKIIWPIEQHENKKFLPLAF). Residues 34–54 (MMFCILLNYSTLRSIKDGFVV) form a helical membrane-spanning segment. A disulfide bridge connects residues Cys37 and Cys85. Residues 55–67 (TDIGTESISFLKT) lie on the Extracellular side of the membrane. A helical transmembrane segment spans residues 68–88 (YIVLPSAVIAMVIYVKLCDIL). Over 89–92 (KQEN) the chain is Cytoplasmic. Residues 93–113 (IFYVITSFFLGYFALFAFVLY) form a helical membrane-spanning segment. Topologically, residues 114 to 147 (PYPDLVHPDHKTIESLSLAYPNFKWFIKIVGKWS) are extracellular. Residues 148–168 (FASFYTIAELWGTMMLSLLFW) form a helical membrane-spanning segment. Residues 169 to 184 (QFANQITKITEAKRFY) lie on the Cytoplasmic side of the membrane. A helical membrane pass occupies residues 185 to 205 (SMFGLLANLALPVTSVVIGYF). Topologically, residues 206–218 (LHEKTQIVSEHLK) are extracellular. A helical transmembrane segment spans residues 219–239 (FIPLFVIMITSSFLIILTYRW). Residues 240–279 (MNKNVLTDPRLYDPTLVKEKKAKAKLSFIESFKMIFTSKY) lie on the Cytoplasmic side of the membrane. The chain crosses the membrane as a helical span at residues 280–300 (VGYIALLIIAYGVSVNLVEGV). Over 301–320 (WKSKVKELYPTKEAYTIYMG) the chain is Extracellular. A helical membrane pass occupies residues 321–341 (QFQFYQGWVAIAFMLIGSNIL). Residues 342-348 (RKVSWLT) lie on the Cytoplasmic side of the membrane. Residues 349 to 369 (AAMITPLMMFITGAAFFSFIF) form a helical membrane-spanning segment. Topologically, residues 370-379 (FDSVIAMNLT) are extracellular. The chain crosses the membrane as a helical span at residues 380–400 (GILASSPLTLAVMFGMIQNVL). Residues 401 to 438 (SKGVKYSLFDATKNMAYIPLDKDLRVKGQAAVEVIGGR) are Cytoplasmic-facing. Residue 436-442 (GGRLGKS) coordinates ATP. A helical membrane pass occupies residues 439 to 459 (LGKSGGAIIQSTFFILFPAFG). The Extracellular portion of the chain corresponds to 460 to 465 (FIEATP). The chain crosses the membrane as a helical span at residues 466–486 (YFASIFFIIVILWIFAVKGLN). Residues 487 to 498 (KEYQVLVNKNEN) lie on the Cytoplasmic side of the membrane.

The protein belongs to the ADP/ATP translocase tlc family.

It localises to the cell membrane. Provides the rickettsial cell with host ATP in exchange for rickettsial ADP. This is an obligate exchange system. This energy acquiring activity is an important component of rickettsial parasitism. The protein is ADP,ATP carrier protein 1 (tlcA) of Rickettsia typhi (strain ATCC VR-144 / Wilmington).